Consider the following 714-residue polypeptide: K(+)-insensitive pyrophosphate-energized proton pump (714 aa).

Positions 1-20 (MRMTVIPIVILCGVLSVVYA) are cleaved as a signal peptide. Transmembrane regions (helical) follow at residues 52-74 (LTRQYLTIAIVGLIVAVLAWYLL), 85-105 (GAVLSGVAGFVGMHVSVRANL), 128-148 (ITGMLVAGLALLGVSIYYFVL), and 166-186 (VSLGFGASLISIFARLGGGIF). Lys-188 contacts substrate. Residues Asp-191, Asp-195, Asn-218, and Asp-221 each contribute to the Mg(2+) site. A run of 6 helical transmembrane segments spans residues 238–258 (AVSVVATMVLAAIFFAGTPIL), 263–283 (VYPLAICGACILTSIAGTFFV), 298–318 (GLIATGVFSVAGLAVATYATV), 333–353 (GTNLFFCGLVGLVVTALIVVI), 383–403 (GLAVSLESTALPAIVIVGGII), and 411–431 (LFGTGIAVTAMLGLAGMIVAL). Asp-439 is a Mg(2+) binding site. Helical transmembrane passes span 470 to 490 (AVTKGYAIGSAGLGALVLFAA), 522 to 542 (YVVAGLLFGGLIPYLFGGIAM), 591 to 611 (VIPSLLPVLAPLVVYFGVLLI), and 618 to 638 (AFAALGASLLGVIINGLFVAI). Residues Asp-648, Asp-680, and Asp-684 each coordinate Ca(2+). Position 687 (Lys-687) interacts with substrate. Residues 693-713 (AVNPAIKITNIVALLLLAVLA) form a helical membrane-spanning segment.

It belongs to the H(+)-translocating pyrophosphatase (TC 3.A.10) family. K(+)-insensitive subfamily. In terms of assembly, homodimer. Mg(2+) is required as a cofactor.

The protein resides in the acidocalcisome membrane. The enzyme catalyses diphosphate + H2O + H(+)(in) = 2 phosphate + 2 H(+)(out). In terms of biological role, proton pump that utilizes the energy of pyrophosphate hydrolysis as the driving force for proton movement across the membrane. Generates a proton motive force. The protein is K(+)-insensitive pyrophosphate-energized proton pump of Agrobacterium fabrum (strain C58 / ATCC 33970) (Agrobacterium tumefaciens (strain C58)).